Reading from the N-terminus, the 173-residue chain is MATRNNGKSKAAGSKSGGGHGVGPWLGLGVIWILLDQLTKIAILKTFAYGESRPITGFFNLVLAYNRGAAFSFLAAAGGWQRWFFTGLGVAAALFIVWLLKRHSGQKLFCFALALILGGALGNVIDRLVYGHVVDFLDFHLRGYHWPAFNVADCGICIGAVLLIIDELRRVRR.

The next 4 helical transmembrane spans lie at proline 24 to leucine 44, isoleucine 55 to alanine 75, tryptophan 80 to leucine 100, and glycine 105 to isoleucine 125. Residues aspartate 135 and aspartate 153 contribute to the active site. The helical transmembrane segment at histidine 145–isoleucine 165 threads the bilayer.

The protein belongs to the peptidase A8 family.

The protein resides in the cell inner membrane. The enzyme catalyses Release of signal peptides from bacterial membrane prolipoproteins. Hydrolyzes -Xaa-Yaa-Zaa-|-(S,diacylglyceryl)Cys-, in which Xaa is hydrophobic (preferably Leu), and Yaa (Ala or Ser) and Zaa (Gly or Ala) have small, neutral side chains.. Its pathway is protein modification; lipoprotein biosynthesis (signal peptide cleavage). Functionally, this protein specifically catalyzes the removal of signal peptides from prolipoproteins. This chain is Lipoprotein signal peptidase, found in Ralstonia nicotianae (strain ATCC BAA-1114 / GMI1000) (Ralstonia solanacearum).